An 84-amino-acid chain; its full sequence is Three-finger toxin MALT0070C (84 aa).

An N-terminal signal peptide occupies residues 1 to 21 (MKTLLLTLVVVTIVCLDLGYT). Cystine bridges form between Cys-24/Cys-43, Cys-36/Cys-60, Cys-64/Cys-71, and Cys-72/Cys-77.

Belongs to the three-finger toxin family. Short-chain subfamily. As to expression, expressed by the venom gland.

It localises to the secreted. The sequence is that of Three-finger toxin MALT0070C from Micrurus altirostris (Uruguayan coral snake).